The primary structure comprises 528 residues: GMP synthase [glutamine-hydrolyzing] (528 aa).

The 191-residue stretch at threonine 13–threonine 203 folds into the Glutamine amidotransferase type-1 domain. Cysteine 90 serves as the catalytic Nucleophile. Active-site residues include histidine 177 and glutamate 179. Residues tryptophan 204 to arginine 402 enclose the GMPS ATP-PPase domain. Serine 231–alanine 237 serves as a coordination point for ATP.

Homodimer.

It catalyses the reaction XMP + L-glutamine + ATP + H2O = GMP + L-glutamate + AMP + diphosphate + 2 H(+). It participates in purine metabolism; GMP biosynthesis; GMP from XMP (L-Gln route): step 1/1. Catalyzes the synthesis of GMP from XMP. In Thermobifida fusca (strain YX), this protein is GMP synthase [glutamine-hydrolyzing].